A 260-amino-acid polypeptide reads, in one-letter code: MSTFTNPLKSRLKETDPLFGLWLSLGSDAAAEALAHAGYDWLLIDMEHSPNDSGDVTSQLRAIAAAHLPSEPVVRVPSSEAWLVKRVLDAGARTLMFPNIESADEAARAVRLTQYPSAGALDGERGVAGAVRAAGYGMRRDYVQTANAQIATIVQIESARGLQEVEKIAATPGVDCLFVGPADLAASLGHLGDSKHADVQAAMARIVSAADKAGIAAGIFAMDVASAKQHRDAGFRFIALAADVMWMLRATRQALQEVRS.

The Proton acceptor role is filled by H48. 2 residues coordinate a divalent metal cation: E157 and D183.

The protein belongs to the HpcH/HpaI aldolase family. The cofactor is Mn(2+). Requires Mg(2+) as cofactor. Co(2+) is required as a cofactor.

It catalyses the reaction D-glyceraldehyde + 3-hydroxypyruvate = 2-dehydro-D-gluconate. The enzyme catalyses D-glyceraldehyde + pyruvate = 2-dehydro-3-deoxy-L-galactonate. It carries out the reaction 2-dehydro-3-deoxy-D-gluconate = D-glyceraldehyde + pyruvate. Its function is as follows. Aldolase which can catalyze in vitro the aldolisation reaction between hydroxypyruvate (HPA) or pyruvate (PA) and D-glyceraldehyde (D-GA). The condensation of hydroxypyruvate and D-glyceraldehyde produces 2-dehydro-D-gluconate. The condensation of pyruvate and D-glyceraldehyde produces 2-dehydro-3-deoxy-L-galactonate as the major product and 2-dehydro-3-deoxy-D-gluconate. Also catalyzes the retro-aldol type decarboxylation of oxaloacetate, a general property of known pyruvate aldolases. The chain is Hydroxypyruvate/pyruvate aldolase Bphyt_0320 from Paraburkholderia phytofirmans (strain DSM 17436 / LMG 22146 / PsJN) (Burkholderia phytofirmans).